Reading from the N-terminus, the 169-residue chain is Nicotinamide-nucleotide adenylyltransferase (169 aa).

The protein belongs to the archaeal NMN adenylyltransferase family.

It localises to the cytoplasm. The enzyme catalyses beta-nicotinamide D-ribonucleotide + ATP + H(+) = diphosphate + NAD(+). The protein operates within cofactor biosynthesis; NAD(+) biosynthesis; NAD(+) from nicotinamide D-ribonucleotide: step 1/1. This chain is Nicotinamide-nucleotide adenylyltransferase, found in Picrophilus torridus (strain ATCC 700027 / DSM 9790 / JCM 10055 / NBRC 100828 / KAW 2/3).